Reading from the N-terminus, the 453-residue chain is uncharacterized protein (453 aa).

[4Fe-4S] cluster is bound by residues Cys74, Cys80, Cys83, and Cys162. S-adenosyl-L-methionine-binding residues include Gln286, Tyr315, Glu336, and Asp384. The Nucleophile role is filled by Cys411.

This sequence belongs to the class I-like SAM-binding methyltransferase superfamily. RNA M5U methyltransferase family.

This is an uncharacterized protein from Staphylococcus aureus (strain MW2).